The primary structure comprises 237 residues: Ribosomal RNA small subunit methyltransferase G (237 aa).

S-adenosyl-L-methionine is bound by residues G78, F83, 129–130 (AE), and R148.

It belongs to the methyltransferase superfamily. RNA methyltransferase RsmG family.

The protein resides in the cytoplasm. Specifically methylates the N7 position of a guanine in 16S rRNA. The polypeptide is Ribosomal RNA small subunit methyltransferase G (Streptococcus pyogenes serotype M49 (strain NZ131)).